We begin with the raw amino-acid sequence, 416 residues long: Probable glucan 1,3-beta-glucosidase A (416 aa).

The first 22 residues, 1-22 (MFVESAKKALLALSLLAASAQA), serve as a signal peptide directing secretion. Asparagine 183 carries N-linked (GlcNAc...) asparagine glycosylation. Residue glutamate 210 is the Proton donor of the active site. Intrachain disulfides connect cysteine 290–cysteine 415 and cysteine 316–cysteine 342. The active-site Nucleophile is glutamate 308.

The protein belongs to the glycosyl hydrolase 5 (cellulase A) family. As to quaternary structure, monomer. It depends on Mn(2+) as a cofactor.

Its subcellular location is the secreted. The enzyme catalyses Successive hydrolysis of beta-D-glucose units from the non-reducing ends of (1-&gt;3)-beta-D-glucans, releasing alpha-glucose.. Its function is as follows. Beta-glucanases participate in the metabolism of beta-glucan, the main structural component of the cell wall. It could also function biosynthetically as a transglycosylase. This is Probable glucan 1,3-beta-glucosidase A (exgA) from Aspergillus niger (strain ATCC MYA-4892 / CBS 513.88 / FGSC A1513).